We begin with the raw amino-acid sequence, 529 residues long: T-complex protein 1 subunit delta (529 aa).

Belongs to the TCP-1 chaperonin family. Heterooligomeric complex of about 850 to 900 kDa that forms two stacked rings, 12 to 16 nm in diameter.

It is found in the cytoplasm. Molecular chaperone; assists the folding of proteins upon ATP hydrolysis. Known to play a role, in vitro, in the folding of actin and tubulin. The polypeptide is T-complex protein 1 subunit delta (CCT4) (Candida glabrata (strain ATCC 2001 / BCRC 20586 / JCM 3761 / NBRC 0622 / NRRL Y-65 / CBS 138) (Yeast)).